A 711-amino-acid chain; its full sequence is Probable cyclic nucleotide-gated ion channel 10 (711 aa).

The Cytoplasmic portion of the chain corresponds to 1 to 81; the sequence is MAFSHDNRVR…QDSFLQNWNK (81 aa). The chain crosses the membrane as a helical span at residues 82–102; it reads IFLFACVVALAIDPLFFYIPI. Residues 103-116 lie on the Extracellular side of the membrane; that stretch reads VDSARHCLTLDSKL. A helical transmembrane segment spans residues 117-137; it reads EIAASLLRTLIDAFYIIHIVF. The Cytoplasmic segment spans residues 138–170; it reads QFRTAYIAPSSRVFGRGELVDDAKAIALKYLSS. The chain crosses the membrane as a helical span at residues 171 to 191; it reads YFIIDLLSILPLPQIVVLAVI. The Extracellular segment spans residues 192 to 204; it reads PSVNQPVSLLTKD. The helical transmembrane segment at 205 to 225 threads the bilayer; it reads YLKFSIIAQYVPRILRMYPLY. Residues 226-243 are Cytoplasmic-facing; it reads TEVTRTSGIVTETAWAGA. A helical membrane pass occupies residues 244–264; it reads AWNLSLYMLASHVFGALWYLI. The Extracellular portion of the chain corresponds to 265–366; that stretch reads SVEREDRCWQ…GQNLQTSKFV (102 aa). Residues 367 to 387 form a helical membrane-spanning segment; it reads GEIIFAISICISGLVLFALLI. Over 388-711 the chain is Cytoplasmic; that stretch reads GNMQKYLEST…DFTANHTTDP (324 aa). A nucleoside 3',5'-cyclic phosphate-binding positions include 473 to 603 and Glu-544; that span reads LFEI…TFRF. A calmodulin-binding region spans residues 589–604; the sequence is FRRLHSKQLQHTFRFY. Residues 609 to 638 enclose the IQ domain; the sequence is RTWSVSFIQAAWRRYCRRKLAKSLRDEEDR. A disordered region spans residues 689–711; sequence YTLPLLPQKPTEPDFTANHTTDP.

It belongs to the cyclic nucleotide-gated cation channel (TC 1.A.1.5) family. As to quaternary structure, homotetramer or heterotetramer.

Its subcellular location is the cell membrane. In terms of biological role, probable cyclic nucleotide-gated ion channel. In Arabidopsis thaliana (Mouse-ear cress), this protein is Probable cyclic nucleotide-gated ion channel 10 (CNGC10).